The primary structure comprises 161 residues: uncharacterized protein (161 aa).

The N-terminal stretch at 1 to 27 (MKKIGLLFMLCLAALFTIGFPAQQADA) is a signal peptide.

The protein localises to the secreted. This is an uncharacterized protein from Bacillus subtilis (strain 168).